The primary structure comprises 942 residues: Protein NLP1 (942 aa).

Residues 1-11 (MEQKPSPPPPP) are compositionally biased toward pro residues. Disordered stretches follow at residues 1 to 32 (MEQKPSPPPPPRSDEEEDGLMGCGMGGTGDIA), 77 to 106 (TTPAPAAGEDDRDEAEMPSRGGGGLEVSPA), 594 to 620 (VKENTCSSDPSNSNSDKAVEKRRTKTE), 723 to 753 (FQLEPSVPDRPCEGRFTSHTSGSNSISPSCS), and 759 to 778 (SLGCSSVPKTQQQHGSAPQL). Residues 21–32 (MGCGMGGTGDIA) are compositionally biased toward gly residues. The segment covering 597 to 609 (NTCSSDPSNSNSD) has biased composition (polar residues). The RWP-RK domain occupies 609 to 690 (DKAVEKRRTK…IDSVHGPEGT (82 aa)). Residues 743 to 753 (SGSNSISPSCS) show a composition bias toward low complexity. Polar residues predominate over residues 765–774 (VPKTQQQHGS). Residues 844–927 (SLKIKAIYGE…QTVRILVNPS (84 aa)) enclose the PB1 domain.

Its subcellular location is the nucleus. Its function is as follows. Probable transcription factor. The polypeptide is Protein NLP1 (NLP1) (Oryza sativa subsp. japonica (Rice)).